Consider the following 338-residue polypeptide: Ferredoxin--NADP reductase (338 aa).

The FAD site is built by D35, Q43, Y48, A88, F122, D289, and T330.

This sequence belongs to the ferredoxin--NADP reductase type 2 family. As to quaternary structure, homodimer. FAD is required as a cofactor.

It carries out the reaction 2 reduced [2Fe-2S]-[ferredoxin] + NADP(+) + H(+) = 2 oxidized [2Fe-2S]-[ferredoxin] + NADPH. The protein is Ferredoxin--NADP reductase of Ehrlichia canis (strain Jake).